We begin with the raw amino-acid sequence, 276 residues long: Rhamnulose-1-phosphate aldolase (276 aa).

The active site involves glutamate 117. Zn(2+) contacts are provided by histidine 141, histidine 143, and histidine 212.

The protein belongs to the aldolase class II family. RhaD subfamily. In terms of assembly, homotetramer. Zn(2+) serves as cofactor.

It is found in the cytoplasm. The enzyme catalyses L-rhamnulose 1-phosphate = (S)-lactaldehyde + dihydroxyacetone phosphate. The protein operates within carbohydrate degradation; L-rhamnose degradation; glycerone phosphate from L-rhamnose: step 3/3. Its function is as follows. Catalyzes the reversible cleavage of L-rhamnulose-1-phosphate to dihydroxyacetone phosphate (DHAP) and L-lactaldehyde. In Enterobacter sp. (strain 638), this protein is Rhamnulose-1-phosphate aldolase.